Consider the following 395-residue polypeptide: Protein-arginine rhamnosyltransferase (395 aa).

DTDP-beta-L-rhamnose is bound by residues 19 to 22, tyrosine 205, glutamine 272, and 288 to 292; these read NYGD and RGEDS. Aspartate 22 serves as the catalytic Proton acceptor. Glutamate 290 is an active-site residue.

Belongs to the glycosyltransferase 104 family.

The enzyme catalyses dTDP-beta-L-rhamnose + L-arginyl-[protein] = N(omega)-(alpha-L-rhamnosyl)-L-arginyl-[protein] + dTDP + H(+). In terms of biological role, protein-arginine rhamnosyltransferase that catalyzes the transfer of a single rhamnose to elongation factor P (EF-P) on 'Lys-32', a modification required for EF-P-dependent rescue of polyproline stalled ribosomes. This is Protein-arginine rhamnosyltransferase from Shewanella oneidensis (strain ATCC 700550 / JCM 31522 / CIP 106686 / LMG 19005 / NCIMB 14063 / MR-1).